A 113-amino-acid polypeptide reads, in one-letter code: T cell receptor alpha variable 8-1 (113 aa).

Positions 1-20 are cleaved as a signal peptide; the sequence is MLLLLIPVLGMIFALRDARA. The Ig-like domain maps to 21–113; the sequence is QSVSQHNHHV…DTAEYFCAVN (93 aa). The cysteines at positions 42 and 110 are disulfide-linked. Asn43 is a glycosylation site (N-linked (GlcNAc...) asparagine).

In terms of assembly, alpha-beta TR is a heterodimer composed of an alpha and beta chain; disulfide-linked. The alpha-beta TR is associated with the transmembrane signaling CD3 coreceptor proteins to form the TR-CD3 (TcR or TCR). The assembly of alpha-beta TR heterodimers with CD3 occurs in the endoplasmic reticulum where a single alpha-beta TR heterodimer associates with one CD3D-CD3E heterodimer, one CD3G-CD3E heterodimer and one CD247 homodimer forming a stable octameric structure. CD3D-CD3E and CD3G-CD3E heterodimers preferentially associate with TR alpha and TR beta chains, respectively. The association of the CD247 homodimer is the last step of TcR assembly in the endoplasmic reticulum and is required for transport to the cell surface.

It localises to the cell membrane. Its function is as follows. V region of the variable domain of T cell receptor (TR) alpha chain that participates in the antigen recognition. Alpha-beta T cell receptors are antigen specific receptors which are essential to the immune response and are present on the cell surface of T lymphocytes. Recognize peptide-major histocompatibility (MH) (pMH) complexes that are displayed by antigen presenting cells (APC), a prerequisite for efficient T cell adaptive immunity against pathogens. Binding of alpha-beta TR to pMH complex initiates TR-CD3 clustering on the cell surface and intracellular activation of LCK that phosphorylates the ITAM motifs of CD3G, CD3D, CD3E and CD247 enabling the recruitment of ZAP70. In turn ZAP70 phosphorylates LAT, which recruits numerous signaling molecules to form the LAT signalosome. The LAT signalosome propagates signal branching to three major signaling pathways, the calcium, the mitogen-activated protein kinase (MAPK) kinase and the nuclear factor NF-kappa-B (NF-kB) pathways, leading to the mobilization of transcription factors that are critical for gene expression and essential for T cell growth and differentiation. The T cell repertoire is generated in the thymus, by V-(D)-J rearrangement. This repertoire is then shaped by intrathymic selection events to generate a peripheral T cell pool of self-MH restricted, non-autoaggressive T cells. Post-thymic interaction of alpha-beta TR with the pMH complexes shapes TR structural and functional avidity. The sequence is that of T cell receptor alpha variable 8-1 from Homo sapiens (Human).